Consider the following 314-residue polypeptide: Solute carrier family 25 member 44 (314 aa).

Solcar repeat units follow at residues 18-100 (KKFY…TRKF), 107-210 (SNTV…YAEQ), and 220-302 (PHIV…LKKL). Transmembrane regions (helical) follow at residues 20–42 (FYVF…TLIR), 71–90 (TGLY…GQCY), 113–133 (LVAG…IDVV), 185–201 (GYVA…AVWW), 222–239 (IVFQ…ASIL), and 278–296 (LSAR…VVGY).

It belongs to the mitochondrial carrier (TC 2.A.29) family.

The protein resides in the mitochondrion membrane. The catalysed reaction is L-valine(in) = L-valine(out). The enzyme catalyses L-leucine(in) = L-leucine(out). Functionally, mitochondrial solute transporter which transports branched-chain amino acid (BCAA; valine, leucine and isoleucine) into mitochondria in brown adipose tissue (BAT). BAT is involved in BCAA catabolism and actively utilizes BCAA in the mitochondria for thermogenesis. The protein is Solute carrier family 25 member 44 of Pongo abelii (Sumatran orangutan).